Here is a 211-residue protein sequence, read N- to C-terminus: MMNQSITPPTHPPMSQRFRGYLPVVVDVETGGFNWNHHALLEIACIPIEMDDTGRLYPGEVTSTHVIPAPGTDIDPKSLEVTGIILDHPFRFAKEEKLALEHIFTPVRATMKKYKCQRAILVGHNAHFDLNFLNAAVTRTAYKRNPFHQFSVFDTVTLAGMAYGQTVLARAVQAAGLDWNAADAHSAVYDAEKTAHLFCTITNTWPLVVAG.

Positions 24–198 (VVVDVETGGF…YDAEKTAHLF (175 aa)) constitute an Exonuclease domain. Mg(2+) contacts are provided by aspartate 27, glutamate 29, histidine 185, and aspartate 190. Histidine 185 functions as the Proton donor/acceptor in the catalytic mechanism.

Belongs to the RNase T family. As to quaternary structure, homodimer. Mg(2+) serves as cofactor.

Trims short 3' overhangs of a variety of RNA species, leaving a one or two nucleotide 3' overhang. Responsible for the end-turnover of tRNA: specifically removes the terminal AMP residue from uncharged tRNA (tRNA-C-C-A). Also appears to be involved in tRNA biosynthesis. The polypeptide is Ribonuclease T (Xylella fastidiosa (strain 9a5c)).